Here is a 574-residue protein sequence, read N- to C-terminus: Membrane protein insertase YidC (574 aa).

A helical transmembrane segment spans residues 6–26 (VFLIFAWLMVAALLWMEWGKD). Residues 45-77 (RDPDAAAPSAANVPSAQPIPQAGAPGTVPATSS) are disordered. 5 helical membrane-spanning segments follow: residues 356–376 (FSIM…LHSF), 380–400 (WGWA…PLSA), 447–467 (GGCL…WVLV), 489–509 (PYFI…KLTP), and 525–545 (PLVF…YWVV).

The protein belongs to the OXA1/ALB3/YidC family. Type 1 subfamily. As to quaternary structure, interacts with the Sec translocase complex via SecD. Specifically interacts with transmembrane segments of nascent integral membrane proteins during membrane integration.

Its subcellular location is the cell inner membrane. Required for the insertion and/or proper folding and/or complex formation of integral membrane proteins into the membrane. Involved in integration of membrane proteins that insert both dependently and independently of the Sec translocase complex, as well as at least some lipoproteins. Aids folding of multispanning membrane proteins. The polypeptide is Membrane protein insertase YidC (Xanthomonas euvesicatoria pv. vesicatoria (strain 85-10) (Xanthomonas campestris pv. vesicatoria)).